The primary structure comprises 350 residues: Small ribosomal subunit biogenesis GTPase RsgA (350 aa).

The segment covering 1 to 17 has biased composition (polar residues); it reads MSKNKLSKGQQRRVNAN. Positions 1 to 27 are disordered; it reads MSKNKLSKGQQRRVNANHQRRLKTSAE. The region spanning 104–273 is the CP-type G domain; the sequence is TSVLTRPDFY…VIDSPGVREF (170 aa). GTP-binding positions include 160–163 and 214–222; these read NKID and GQSGVGKSS. Positions 297, 302, 304, and 310 each coordinate Zn(2+).

This sequence belongs to the TRAFAC class YlqF/YawG GTPase family. RsgA subfamily. In terms of assembly, monomer. Associates with 30S ribosomal subunit, binds 16S rRNA. Zn(2+) serves as cofactor.

Its subcellular location is the cytoplasm. Its function is as follows. One of several proteins that assist in the late maturation steps of the functional core of the 30S ribosomal subunit. Helps release RbfA from mature subunits. May play a role in the assembly of ribosomal proteins into the subunit. Circularly permuted GTPase that catalyzes slow GTP hydrolysis, GTPase activity is stimulated by the 30S ribosomal subunit. The chain is Small ribosomal subunit biogenesis GTPase RsgA from Salmonella typhi.